The sequence spans 242 residues: MTQIGSFDLEKKTAVVAVILEKPLENSKKAAEKGADILEIRLDLLGIRTPERAAEVIREIKAETGIPIIVTSRSGAEGGKWDGKEEDRTGLLINLLSLKDGPDAIDIELSAGMKERNRVIKAAKDRETAVIVSSHDFLKTPPLQNMRTIIEEMFLAGADIAKLAVMPLSVGDTLNLLRVTLDFKDAGKSVCTIAMGSQGKHTRVVAPFYGSVLTYASIESNASAAPGQLPVDEVKKIMEMLK.

Residues 39–41 and Arg-73 contribute to the 3-dehydroquinate site; that span reads EIR. His-135 (proton donor/acceptor) is an active-site residue. Lys-162 acts as the Schiff-base intermediate with substrate in catalysis. 2 residues coordinate 3-dehydroquinate: Arg-203 and Gln-228.

This sequence belongs to the type-I 3-dehydroquinase family. Homodimer.

It carries out the reaction 3-dehydroquinate = 3-dehydroshikimate + H2O. Its pathway is metabolic intermediate biosynthesis; chorismate biosynthesis; chorismate from D-erythrose 4-phosphate and phosphoenolpyruvate: step 3/7. Involved in the third step of the chorismate pathway, which leads to the biosynthesis of aromatic amino acids. Catalyzes the cis-dehydration of 3-dehydroquinate (DHQ) and introduces the first double bond of the aromatic ring to yield 3-dehydroshikimate. The chain is 3-dehydroquinate dehydratase from Methanosarcina mazei (strain ATCC BAA-159 / DSM 3647 / Goe1 / Go1 / JCM 11833 / OCM 88) (Methanosarcina frisia).